The sequence spans 202 residues: MADS-box transcription factor 33 (202 aa).

The region spanning 1-61 is the MADS-box domain; the sequence is MVRGKVQMRR…GKLHELATNG (61 aa). Positions 87–177 constitute a K-box domain; it reads QQVAEQGIFL…QEKVKEQQKL (91 aa).

As to expression, expressed in seedling roots.

The protein resides in the nucleus. Probable transcription factor. The sequence is that of MADS-box transcription factor 33 (MADS33) from Oryza sativa subsp. japonica (Rice).